A 1688-amino-acid polypeptide reads, in one-letter code: Voltage-dependent L-type calcium channel subunit alpha-1S (1688 aa).

Residues 1-24 (MDAMGSAAEEGTQKKKRRPLVPPP) form a disordered region. Residues 1 to 51 (MDAMGSAAEEGTQKKKRRPLVPPPPRPPRALFCLGLQNPFRKFCINIVEWK) are Cytoplasmic-facing. The stretch at 38 to 335 (NPFRKFCINI…LVLGVLSGEF (298 aa)) is one I repeat. A helical membrane pass occupies residues 52–70 (PFEMIILLTIFANCVALAI). Residues 71 to 88 (FLPMPEDDTNSTNSVLEK) lie on the Extracellular side of the membrane. Asn80 carries N-linked (GlcNAc...) asparagine glycosylation. Residues 89-108 (VEYIFLFIFTIESFLKIVAY) form a helical membrane-spanning segment. Residues 109–120 (GFILHTDAYLRN) are Cytoplasmic-facing. The chain crosses the membrane as a helical span at residues 121–139 (GWNILDFTIVSVGVFSVLL). The Extracellular portion of the chain corresponds to 140–158 (EQISKLQGLPAPGKSSGFN). The helical transmembrane segment at 159 to 177 (VKALRAFRVLRPLRLVSGV) threads the bilayer. Residues 178 to 196 (PSLQVVLNSIIKAMIPLLH) are Cytoplasmic-facing. The chain crosses the membrane as a helical span at residues 197–216 (IALLVLFMIIIYAIVGLELF). The Extracellular segment spans residues 217–307 (SGKMHKTCYF…WVNDAIGNEW (91 aa)). Asn255 carries N-linked (GlcNAc...) asparagine glycosylation. Glu290 is a Ca(2+) binding site. Residues 308–332 (PWIYFVSLILLGSFFVLNLVLGVLS) form a helical membrane-spanning segment. Residues 333-431 (GEFTKEREKA…RKSRDLVKSR (99 aa)) are Cytoplasmic-facing. A binding to the beta subunit region spans residues 355 to 372 (QAMDEDLRGYLDWITHAE). Residues 417–663 (HRLLRRKSRD…VFLAIAVDNL (247 aa)) form an II repeat. Residues 432–450 (FFYWLVIIIILLNTVIIAT) traverse the membrane as a helical segment. Over 451–465 (EHHHQPDSLTKAQDI) the chain is Extracellular. A helical membrane pass occupies residues 466 to 485 (ANEVLLALFTMEMIVKIYAL). Residues 486 to 493 (GFQSYFMS) lie on the Cytoplasmic side of the membrane. A helical membrane pass occupies residues 494–512 (LFNRFDSFVVCTGLLEVML). Topologically, residues 513–522 (VASDIMSPLG) are extracellular. Residues 523 to 541 (ISVLRCIRLLRIFKITRYW) form a helical membrane-spanning segment. Over 542–560 (TSLNNLVASLLNSVRSIAS) the chain is Cytoplasmic. The helical transmembrane segment at 561–580 (LLLLLFLFMIIFALLGMQMF) threads the bilayer. Residues 581–635 (GGKFDFEDLEVRRSTFDTFPQALITVFQILTGEDWTAVMYNGIMAYGGPTYSGMS) lie on the Extracellular side of the membrane. Residue Glu613 participates in Ca(2+) binding. A helical membrane pass occupies residues 636–660 (VCIYFIILFVCGNYILLNVFLAIAV). At 661-797 (DNLAEAENLT…VLCHRIINAT (137 aa)) the chain is on the cytoplasmic side. Disordered stretches follow at residues 672 to 696 (AQKA…TEEE) and 729 to 755 (EIKD…ISPR). A compositionally biased stretch (acidic residues) spans 740–749 (PGDDEEEEPE). An III repeat occupies 784–1066 (NKIRVLCHRI…IFVGFVIVTF (283 aa)). A helical transmembrane segment spans residues 798–816 (TFTNFILLFILLSSISLAA). Over 817–832 (EDPIQPESFRNKVLSK) the chain is Extracellular. The chain crosses the membrane as a helical span at residues 833–852 (LDIVFTVIFTTEIVLKMTAY). The Cytoplasmic segment spans residues 853–864 (GAFLHKGSFCRN). A helical transmembrane segment spans residues 865–883 (SFNILDLSVVGVSLISMGI). Over 884-890 (ESSAISV) the chain is Extracellular. The chain crosses the membrane as a helical span at residues 891 to 909 (VKILRVLRVLRPLRAINRA). The Cytoplasmic portion of the chain corresponds to 910–928 (KGLKHVVQCLFVAIKTIGN). A helical transmembrane segment spans residues 929-948 (IVLVTTLLQFMFSCIGVQLF). The Extracellular portion of the chain corresponds to 949-1038 (KGKFYSCTDT…MGPIYNYRIE (90 aa)). The dihydropyridine binding stretch occupies residues 986 to 1075 (RVWSHSDFHF…FQEQGEQEYK (90 aa)). Glu1012 is a Ca(2+) binding site. Residues 1039-1063 (IAVFFIVYIILIAFFMMNIFVGFVI) traverse the membrane as a helical segment. Over 1064-1116 (VTFQEQGEQEYKDCELDKNQRQCVQYALKARPLRRYIPKNPHQYKIWYVVTSS) the chain is Cytoplasmic. Residues 1103–1371 (NPHQYKIWYV…LFVAVIMDNF (269 aa)) form an IV repeat. A helical membrane pass occupies residues 1117–1135 (YFEYLMFFLITLNTISLGM). The Extracellular portion of the chain corresponds to 1136–1150 (QHYGQTAEFSYMSDI). A helical transmembrane segment spans residues 1151 to 1170 (LNVAFTGIFTVEMFLKLAAF). Topologically, residues 1171-1178 (KAKGYFGD) are cytoplasmic. Residues 1179–1197 (PWNVFDFLIVIGSVIDVIL) form a helical membrane-spanning segment. At 1198–1218 (SEIDTPGIPATPGAEESSRIS) the chain is on the extracellular side. A helical membrane pass occupies residues 1219–1237 (ITFFRLFRVLRLVKLLSRG). At 1238-1256 (EGVRTLLWTFIKSFQALPY) the chain is on the cytoplasmic side. The helical transmembrane segment at 1257–1276 (VALLIVMLFFIYAVIGMQVF) threads the bilayer. Residues 1277–1343 (GKIALVDGTH…GEEYTCGTSF (67 aa)) are Extracellular-facing. The interval 1324-1390 (LCDPMSDFQP…LGPHHLDEFK (67 aa)) is dihydropyridine binding. The interval 1336 to 1379 (EYTCGTSFAYFYFISFYMLCAFLIINLFVAVIMDNFDYLTRDWS) is phenylalkylamine binding. The helical transmembrane segment at 1344-1368 (AYFYFISFYMLCAFLIINLFVAVIM) threads the bilayer. The Cytoplasmic segment spans residues 1369 to 1688 (DNFDYLTRDW…TNSSISQATN (320 aa)). 2 disordered regions span residues 1635–1664 (PEPV…RLTT) and 1669–1688 (RVQQ…QATN). Positions 1678 to 1688 (DTNSSISQATN) are enriched in polar residues.

The protein belongs to the calcium channel alpha-1 subunit (TC 1.A.1.11) family. In terms of assembly, multisubunit complex consisting of alpha-1, alpha-2, beta and delta subunits in a 1:1:1:1 ratio. The channel activity is directed by the pore-forming and voltage-sensitive alpha-1 subunit. In many cases, this subunit is sufficient to generate voltage-sensitive calcium channel activity. The auxiliary subunits beta and alpha-2/delta linked by a disulfide bridge regulate the channel activity. An additional gamma subunit is present only in skeletal muscle L-type channel. In terms of processing, phosphorylation by PKA stimulates the calcium channel function. Skeletal muscle specific.

The protein localises to the membrane. Voltage-sensitive calcium channels (VSCC) mediate the entry of calcium ions into excitable cells and are also involved in a variety of calcium-dependent processes, including muscle contraction, gene expression, cell motility, cell division and cell death. The isoform alpha-1S gives rise to L-type calcium currents. Long-lasting (L-type) calcium channels belong to the 'high-voltage activated' (HVA) group. They are blocked by dihydropyridines (DHP), phenylalkylamines, and by benzothiazepines. Calcium channels containing the alpha-1S subunit play an important role in excitation-contraction coupling in skele|tal muscle. The chain is Voltage-dependent L-type calcium channel subunit alpha-1S from Aquarana catesbeiana (American bullfrog).